A 441-amino-acid polypeptide reads, in one-letter code: MKERSTELVQGFRHSVPYINAHRGKTFVVMLGGEAIEHENFSSIVNDIGLLHSLGIRLVVVYGARPQIDSNLADHNYEPIYHKHTRVTDARTLEMVKQAAGLLQLDITARLSMSLNNTPLQGAHINVVSGNFIIAQPLGVDDGVDYCHSGRIRRIDEEAIHRQLDNGAIVLLGPVAVSVTGESFNLTSEEVATQLAIKLKAEKMIGFCSSQGVTDSEGNIISELFPNDAQKRIEDLEQDGDYNSGTVRFLRGAVKACRSGVRRSHLLSYQEDGALIQELFSRDGIGTQIVMESAEQVRRATINDIGGILELIRPLEQQGILVRRSREQLEMEIDKFTIIERDNLTIACAALYPFPDEHIGEMACVAVHPDYRSSSRGEMLLNRITNQARQMGLKKLFVLTTRSIHWFQERGFTPAEVDVLPIQKQELYNYQRRSKILLADL.

Positions E295–S434 constitute an N-acetyltransferase domain.

The protein belongs to the acetyltransferase family. ArgA subfamily. As to quaternary structure, homohexamer.

Its subcellular location is the cytoplasm. It carries out the reaction L-glutamate + acetyl-CoA = N-acetyl-L-glutamate + CoA + H(+). Its pathway is amino-acid biosynthesis; L-arginine biosynthesis; N(2)-acetyl-L-ornithine from L-glutamate: step 1/4. The chain is Amino-acid acetyltransferase from Yersinia pseudotuberculosis serotype O:1b (strain IP 31758).